Here is a 350-residue protein sequence, read N- to C-terminus: Arabinogalactan endo-beta-1,4-galactanase A (350 aa).

The signal sequence occupies residues 1–17 (MILSSLLPLSLVTLTSA). Asn-129 carries N-linked (GlcNAc...) asparagine glycosylation. The Proton donor role is filled by Glu-153. Glu-263 functions as the Nucleophile in the catalytic mechanism.

Belongs to the glycosyl hydrolase 53 family.

It localises to the secreted. The enzyme catalyses The enzyme specifically hydrolyzes (1-&gt;4)-beta-D-galactosidic linkages in type I arabinogalactans.. Its function is as follows. Endogalactanase involved in the degradation of plant cell wall polysaccharides, and more particularly of hairy regions of pectin. The sequence is that of Arabinogalactan endo-beta-1,4-galactanase A (galA) from Emericella nidulans (strain FGSC A4 / ATCC 38163 / CBS 112.46 / NRRL 194 / M139) (Aspergillus nidulans).